Consider the following 271-residue polypeptide: Putative pyruvate, phosphate dikinase regulatory protein (271 aa).

Residue G153 to T160 coordinates ADP.

It belongs to the pyruvate, phosphate/water dikinase regulatory protein family. PDRP subfamily.

It catalyses the reaction N(tele)-phospho-L-histidyl/L-threonyl-[pyruvate, phosphate dikinase] + ADP = N(tele)-phospho-L-histidyl/O-phospho-L-threonyl-[pyruvate, phosphate dikinase] + AMP + H(+). It carries out the reaction N(tele)-phospho-L-histidyl/O-phospho-L-threonyl-[pyruvate, phosphate dikinase] + phosphate + H(+) = N(tele)-phospho-L-histidyl/L-threonyl-[pyruvate, phosphate dikinase] + diphosphate. Its function is as follows. Bifunctional serine/threonine kinase and phosphorylase involved in the regulation of the pyruvate, phosphate dikinase (PPDK) by catalyzing its phosphorylation/dephosphorylation. This is Putative pyruvate, phosphate dikinase regulatory protein from Shouchella clausii (strain KSM-K16) (Alkalihalobacillus clausii).